The following is a 311-amino-acid chain: ADP-ribosyl cyclase/cyclic ADP-ribose hydrolase 2 (311 aa).

A signal peptide spans 1–24 (MAVQGGLLSLWLWLWLSLLTVLLG). Intrachain disulfides connect cysteine 46-cysteine 60, cysteine 76-cysteine 156, and cysteine 137-cysteine 150. Residues asparagine 59 and asparagine 88 are each glycosylated (N-linked (GlcNAc...) asparagine). Tryptophan 102 is an NAD(+) binding site. A nicotinamide-binding site is contributed by tryptophan 102. N-linked (GlcNAc...) asparagine glycosylation occurs at asparagine 141. NAD(+) is bound at residue tryptophan 165. Residue asparagine 185 is glycosylated (N-linked (GlcNAc...) asparagine). Glutamate 203 provides a ligand contact to NAD(+). 2 disulfides stabilise this stretch: cysteine 231-cysteine 252 and cysteine 264-cysteine 273. A lipid anchor (GPI-anchor amidated serine) is attached at serine 286. The propeptide occupies 287–311 (ASLHAIGDASLLISLLVALASSSQA).

The protein belongs to the ADP-ribosyl cyclase family. As to quaternary structure, homodimer. As to expression, expressed in the bone marrow, spleen and thymus in lymphoid organs, and the lung, kidney and heart in non-lymphoid organs.

The protein resides in the cell membrane. The catalysed reaction is NAD(+) + H2O = ADP-D-ribose + nicotinamide + H(+). It catalyses the reaction NAD(+) = cyclic ADP-beta-D-ribose + nicotinamide + H(+). It carries out the reaction cyclic ADP-beta-D-ribose + H2O = ADP-D-ribose. Its function is as follows. Catalyzes both the synthesis of cyclic ADP-beta-D-ribose (cADPR) from NAD(+), and its hydrolysis to ADP-D-ribose (ADPR). Cyclic ADPR is known to serve as an endogenous second messenger that elicits calcium release from intracellular stores, and thus regulates the mobilization of intracellular calcium. May be involved in pre-B-cell growth. The sequence is that of ADP-ribosyl cyclase/cyclic ADP-ribose hydrolase 2 (Bst1) from Mus musculus (Mouse).